The primary structure comprises 94 residues: C-C motif chemokine 26 (94 aa).

An N-terminal signal peptide occupies residues 1 to 23; that stretch reads MKSFPVAFLVLLIFILSVHRGVT. 2 disulfides stabilise this stretch: Cys33/Cys57 and Cys34/Cys73.

The protein belongs to the intercrine beta (chemokine CC) family. Monomer.

Its subcellular location is the secreted. Chemoattractant for eosinophils and basophils. Acts as a ligand for C-C chemokine receptor CCR3 which triggers Ca(2+) mobilization in eosinophils. Also acts as a ligand for CX3C chemokine receptor CX3CR1, inducing cell chemotaxis. The protein is C-C motif chemokine 26 of Canis lupus familiaris (Dog).